Reading from the N-terminus, the 231-residue chain is AA9 family lytic polysaccharide monooxygenase F (231 aa).

The signal sequence occupies residues 1–17 (MLPSISLLLAAALGTSA). The Cu(2+) site is built by His18, Asp50, and His89. An O2-binding site is contributed by Asp50. Disulfide bonds link Cys59–Cys177 and Cys147–Cys231. O2-binding residues include His163 and Gln172. Tyr174 provides a ligand contact to Cu(2+).

The protein belongs to the polysaccharide monooxygenase AA9 family. Requires Cu(2+) as cofactor.

It is found in the secreted. The catalysed reaction is [(1-&gt;4)-beta-D-glucosyl]n+m + reduced acceptor + O2 = 4-dehydro-beta-D-glucosyl-[(1-&gt;4)-beta-D-glucosyl]n-1 + [(1-&gt;4)-beta-D-glucosyl]m + acceptor + H2O.. In terms of biological role, lytic polysaccharide monooxygenase (LPMO) that depolymerizes crystalline and amorphous polysaccharides via the oxidation of scissile alpha- or beta-(1-4)-glycosidic bonds, yielding C1 oxidation products. Catalysis by LPMOs requires the reduction of the active-site copper from Cu(II) to Cu(I) by a reducing agent and H(2)O(2) or O(2) as a cosubstrate. The sequence is that of AA9 family lytic polysaccharide monooxygenase F (gh61-6) from Neurospora crassa (strain ATCC 24698 / 74-OR23-1A / CBS 708.71 / DSM 1257 / FGSC 987).